The following is an 860-amino-acid chain: Leucine--tRNA ligase (860 aa).

A 'HIGH' region motif is present at residues 73–83; the sequence is VLQPIGWDAFG. The 'KMSKS' region motif lies at 650 to 654; the sequence is SPADM. Residue D653 participates in ATP binding.

This sequence belongs to the class-I aminoacyl-tRNA synthetase family.

The protein resides in the cytoplasm. It catalyses the reaction tRNA(Leu) + L-leucine + ATP = L-leucyl-tRNA(Leu) + AMP + diphosphate. The chain is Leucine--tRNA ligase from Shigella flexneri.